Consider the following 135-residue polypeptide: MKNAGPSQRQLRVGEQVRHAVAYKLQQGILLDDLLKNIVISVAEVRMSPDLKIATCFVSSLSTLHNVSPTDVVNVLNKHSRFIRREISYSLRQMKYMPELRFRLDTSFDNFSKIDSLLRSPEVARDLHHNDEFKD.

The protein belongs to the RbfA family. Monomer. Binds 30S ribosomal subunits, but not 50S ribosomal subunits or 70S ribosomes.

It is found in the cytoplasm. Functionally, one of several proteins that assist in the late maturation steps of the functional core of the 30S ribosomal subunit. Associates with free 30S ribosomal subunits (but not with 30S subunits that are part of 70S ribosomes or polysomes). Required for efficient processing of 16S rRNA. May interact with the 5'-terminal helix region of 16S rRNA. This chain is Ribosome-binding factor A, found in Bartonella quintana (strain Toulouse) (Rochalimaea quintana).